The chain runs to 806 residues: Facilitated trehalose transporter Tret1 (806 aa).

Disordered regions lie at residues 1 to 34 and 48 to 138; these read MFGNEMDDTRDPLQYGYQRVNTGEGSLSTSTTGT and LNST…HKNQ. Residues 1 to 339 lie on the Cytoplasmic side of the membrane; sequence MFGNEMDDTR…LEVYRPTTNP (339 aa). A compositionally biased stretch (low complexity) spans 25 to 34; that stretch reads GSLSTSTTGT. The chain crosses the membrane as a helical span at residues 340–360; sequence IFIWTQVLAALSVSLGSMVVG. At 361-389 the chain is on the extracellular side; sequence FSSAYTSPALVSMKDRNITSFEVTDQSGS. N377 carries an N-linked (GlcNAc...) asparagine glycan. A helical membrane pass occupies residues 390-410; it reads WVGGIMPLAGLAGGILGGPLI. The Cytoplasmic portion of the chain corresponds to 411–424; sequence EYLGRKNTILATAT. A helical membrane pass occupies residues 425-445; sequence PFIISWLLIACATHVAMVLVG. Residues 446-447 are Extracellular-facing; it reads RA. Residues 448–468 traverse the membrane as a helical segment; it reads LSGFSVGVASLSLPVYLGETV. Topologically, residues 469–473 are cytoplasmic; sequence QPEVR. A helical transmembrane segment spans residues 474 to 494; sequence GTLGLLPTAFGNIGILLCFVA. Residues 495 to 501 are Extracellular-facing; that stretch reads GKYMDWS. The chain crosses the membrane as a helical span at residues 502 to 522; sequence GLAFLGAALPIPFLLLMFLIP. The Cytoplasmic segment spans residues 523–585; sequence ETPRWYVSRG…DLMKKANLKP (63 aa). The helical transmembrane segment at 586–606 threads the bilayer; sequence LLISLGLMFFQQLSGINAVIF. The Extracellular segment spans residues 607 to 622; the sequence is YTVQIFQDAGSTIDEN. Residues 623 to 643 traverse the membrane as a helical segment; that stretch reads LCTIIVGVVNFIATFIATMLI. Residues 644-649 are Cytoplasmic-facing; the sequence is DRLGRK. The helical transmembrane segment at 650 to 670 threads the bilayer; that stretch reads MLLYISDVAMIITLMTLGGFF. Over 671–681 the chain is Extracellular; that stretch reads YVKNSGQDVSQ. Residues 682 to 702 form a helical membrane-spanning segment; it reads VGWLPLAAFVIYVLGFSLGFG. Residues 703-723 lie on the Cytoplasmic side of the membrane; it reads PIPWLMMGEILPGKIRGSAAS. A helical membrane pass occupies residues 724–744; sequence VATAFNWSCTFIVTKTFADII. The Extracellular segment spans residues 745–750; the sequence is NAIGTH. A helical membrane pass occupies residues 751-771; it reads GTFWMFGSICVIGLAFVIFYV. At 772–806 the chain is on the cytoplasmic side; sequence PETQGKSLEDIERKMMGRVRRMSSVANIKPLSFNM.

It belongs to the major facilitator superfamily. Sugar transporter (TC 2.A.1.1) family. Trehalose transporter subfamily.

It localises to the cell membrane. Its function is as follows. High-capacity facilitative transporter for trehalose. Does not transport maltose, sucrose or lactose. Mediates the bidirectional transfer of trehalose. Responsible for the transport of trehalose synthesized in the fat body and the incorporation of trehalose into other tissues that require a carbon source, thereby regulating trehalose levels in the hemolymph. This is Facilitated trehalose transporter Tret1 from Aedes aegypti (Yellowfever mosquito).